Consider the following 100-residue polypeptide: Urease subunit gamma (100 aa).

The protein belongs to the urease gamma subunit family. As to quaternary structure, heterotrimer of UreA (gamma), UreB (beta) and UreC (alpha) subunits. Three heterotrimers associate to form the active enzyme.

Its subcellular location is the cytoplasm. It carries out the reaction urea + 2 H2O + H(+) = hydrogencarbonate + 2 NH4(+). Its pathway is nitrogen metabolism; urea degradation; CO(2) and NH(3) from urea (urease route): step 1/1. The chain is Urease subunit gamma from Acetivibrio thermocellus (strain ATCC 27405 / DSM 1237 / JCM 9322 / NBRC 103400 / NCIMB 10682 / NRRL B-4536 / VPI 7372) (Clostridium thermocellum).